Reading from the N-terminus, the 750-residue chain is Methylmalonyl-CoA mutase, mitochondrial (750 aa).

Residues 1-32 (MLRAKNQLFLLSPHYLRQVKESSGSRLIQQRL) constitute a mitochondrion transit peptide. Glutamine 50 serves as a coordination point for malonyl-CoA. Lysine 89 is modified (N6-acetyllysine). Residues 96-99 (YPTM) and 106-110 (TIRQY) contribute to the malonyl-CoA site. The residue at position 212 (lysine 212) is an N6-acetyllysine. Malonyl-CoA is bound by residues 216–218 (TIQ), arginine 228, lysine 255, histidine 265, and 304–306 (RLS). An N6-acetyllysine modification is found at lysine 335. Lysine 343 bears the N6-succinyllysine mark. Serine 481 carries the post-translational modification Phosphoserine. Residue lysine 595 is modified to N6-succinyllysine. Lysine 602 bears the N6-acetyllysine mark. In terms of domain architecture, B12-binding spans 614–746 (RPRLLVAKMG…DDIEKCLEKK (133 aa)). Histidine 627 contacts adenosylcob(III)alamin.

This sequence belongs to the methylmalonyl-CoA mutase family. Homodimer. Interacts (the apoenzyme form) with MMAA; the interaction is GTP dependent. Adenosylcob(III)alamin is required as a cofactor.

Its subcellular location is the mitochondrion matrix. The protein resides in the mitochondrion. It is found in the cytoplasm. The enzyme catalyses (R)-methylmalonyl-CoA = succinyl-CoA. With respect to regulation, inhibited by itaconyl-CoA, a metabolite that inactivates the coenzyme B12 cofactor. In terms of biological role, catalyzes the reversible isomerization of methylmalonyl-CoA (MMCoA) (generated from branched-chain amino acid metabolism and degradation of dietary odd chain fatty acids and cholesterol) to succinyl-CoA (3-carboxypropionyl-CoA), a key intermediate of the tricarboxylic acid cycle. This chain is Methylmalonyl-CoA mutase, mitochondrial (MMUT), found in Bos taurus (Bovine).